A 108-amino-acid polypeptide reads, in one-letter code: Ig kappa chain V region K-25 (108 aa).

The framework-1 stretch occupies residues 1 to 23; it reads AVELTQTPASVEAAVGGTVTIKC. The complementarity-determining-1 stretch occupies residues 24–34; the sequence is QASQBIYSYLS. The segment at 35–49 is framework-2; it reads WYQQKPGQPPKLLIY. A complementarity-determining-2 region spans residues 50–56; that stretch reads KASTLAS. The interval 57 to 88 is framework-3; it reads GVSSRFKGSGSGTEFTLTISDLZCADAATYYC. The segment at 89 to 97 is complementarity-determining-3; that stretch reads QTYSYSSTY. Residues 98–107 form a framework-4 region; sequence FGGGTEVVVK.

The protein is Ig kappa chain V region K-25 of Oryctolagus cuniculus (Rabbit).